Here is a 456-residue protein sequence, read N- to C-terminus: tRNA(Ile)-lysidine synthase (456 aa).

ATP is bound at residue 27–32 (SGGVDS).

It belongs to the tRNA(Ile)-lysidine synthase family.

It localises to the cytoplasm. The catalysed reaction is cytidine(34) in tRNA(Ile2) + L-lysine + ATP = lysidine(34) in tRNA(Ile2) + AMP + diphosphate + H(+). Ligates lysine onto the cytidine present at position 34 of the AUA codon-specific tRNA(Ile) that contains the anticodon CAU, in an ATP-dependent manner. Cytidine is converted to lysidine, thus changing the amino acid specificity of the tRNA from methionine to isoleucine. The polypeptide is tRNA(Ile)-lysidine synthase (Vibrio atlanticus (strain LGP32) (Vibrio splendidus (strain Mel32))).